Consider the following 396-residue polypeptide: MSKEKFERTKPHVNVGTIGHIDHGKTTLTAAITRVLSTKGQASFTDFSDIDKAPEEKERGITIATAHVEYETVNRHYAHVDCPGHADYIKNMITGAAQMDGAILVVAATDGAMPQTREHILLARQVGVPAMVVFLNKCDMVDDDELIELVEMELRELLDDYEFPGDDVPFIHGSALLALENPEDEDKAACIWELMDQIDSYIPEPERDVDQPFLMPVEDVFSISGRGTVATGRVERGIIKVGEEVAIVGVRDTVKTTCTGVEMFRKLLDEGRAGDNIGALLRGVKREDIERGQVLAKPGTITPHTKFKAECYILGKDEGGRHTPFFNGYRPQFYFRTTDVTGIVTLPEGIEMVMPGDNVAVEAELITPIAMDAGLRFAIREGGRTVGAGVISEIIA.

Positions 10–206 constitute a tr-type G domain; the sequence is KPHVNVGTIG…QIDSYIPEPE (197 aa). The tract at residues 19–26 is G1; that stretch reads GHIDHGKT. 19–26 serves as a coordination point for GTP; that stretch reads GHIDHGKT. A Mg(2+)-binding site is contributed by T26. Positions 60-64 are G2; it reads GITIA. A G3 region spans residues 81 to 84; sequence DCPG. Residues 81-85 and 136-139 each bind GTP; these read DCPGH and NKCD. The segment at 136–139 is G4; sequence NKCD. Residues 174–176 form a G5 region; it reads SAL.

The protein belongs to the TRAFAC class translation factor GTPase superfamily. Classic translation factor GTPase family. EF-Tu/EF-1A subfamily. In terms of assembly, monomer.

The protein resides in the cytoplasm. It carries out the reaction GTP + H2O = GDP + phosphate + H(+). Its function is as follows. GTP hydrolase that promotes the GTP-dependent binding of aminoacyl-tRNA to the A-site of ribosomes during protein biosynthesis. The sequence is that of Elongation factor Tu 1 from Desulfotalea psychrophila (strain LSv54 / DSM 12343).